A 90-amino-acid polypeptide reads, in one-letter code: Bombyxin B-3 (90 aa).

The signal sequence occupies residues 1-20 (MMKTTIMFMLVVVISLTYSS). 3 cysteine pairs are disulfide-bonded: Cys-30/Cys-76, Cys-42/Cys-89, and Cys-75/Cys-80. Residues 49 to 67 (SGAQYAPYFWTRQYLGSRG) constitute a propeptide, c peptide like.

The protein belongs to the insulin family. As to quaternary structure, heterodimer of a B chain and an A chain linked by two disulfide bonds.

The protein resides in the secreted. Brain peptide responsible for activation of prothoracic glands to produce ecdysone in insects. This is Bombyxin B-3 (BBXB3) from Bombyx mori (Silk moth).